The chain runs to 403 residues: MALLLNSTMTVAMKQNPATAVSFMQTTCLGSSFSPPRHLQVSCVATNPSKTFRPIKEVSNQVTHTITQEKLEIFKSMENWAQENLLSYLKPVETSWQPQDFLPETKDEDRFYEQVKELRDRTKEIPDDYFVVLVGDMITEEALPTYQTVMNTLDGAKDETGVSLTPWAVWLRAWTAEENRHGDLLNKYLYLSGRVDTRHVEKTIQYLIGSGMDTKYENNPYNGYIYTSFQERATFISHANTAKLATTYGDTTLAKICGTIAADEKRHEMAYTRIVEKLFEIDPDGTVQALASMMRKRITMPAQLMHDGRDDNLFDHYAAVAQRIGVYTATDYAGILEFLLRRWEVEKLGMGLSGEGRRAQDYLCTLPQRIRRLEERADDRVKRASKSKPSVSFSWIYGREVEL.

Residues methionine 1–valine 44 constitute a chloroplast transit peptide. Positions 140, 178, 181, 231, 264, and 267 each coordinate Fe cation.

This sequence belongs to the fatty acid desaturase type 2 family. Homodimer. Fe(2+) is required as a cofactor. In terms of tissue distribution, preferentially expressed in roots.

The protein localises to the plastid. The protein resides in the chloroplast. It carries out the reaction octadecanoyl-[ACP] + 2 reduced [2Fe-2S]-[ferredoxin] + O2 + 2 H(+) = (9Z)-octadecenoyl-[ACP] + 2 oxidized [2Fe-2S]-[ferredoxin] + 2 H2O. It functions in the pathway lipid metabolism; fatty acid metabolism. Converts stearoyl-ACP to oleoyl-ACP by introduction of a cis double bond between carbons 9 and 10 of the acyl chain. This Arabidopsis thaliana (Mouse-ear cress) protein is Stearoyl-[acyl-carrier-protein] 9-desaturase 4, chloroplastic (S-ACP-DES4).